The primary structure comprises 524 residues: Cytochrome P450 4F3 (524 aa).

The chain crosses the membrane as a helical span at residues 15–35 (AASPWLLLLLVGASCLLAYIL). Cys468 lines the heme pocket.

Belongs to the cytochrome P450 family. The cofactor is heme.

The protein localises to the endoplasmic reticulum membrane. The protein resides in the microsome membrane. The catalysed reaction is leukotriene B4 + reduced [NADPH--hemoprotein reductase] + O2 = 18-hydroxy-leukotriene B4 + oxidized [NADPH--hemoprotein reductase] + H2O + H(+). It catalyses the reaction leukotriene B4 + reduced [NADPH--hemoprotein reductase] + O2 = 19-hydroxy-leukotriene B4 + oxidized [NADPH--hemoprotein reductase] + H2O + H(+). It participates in lipid metabolism; leukotriene B4 degradation. Its function is as follows. A cytochrome P450 monooxygenase involved in the metabolism of the pro-inflammatory lipid mediator leukotriene B4 (LTB4). Hydroxylates at the omega-1 and omega-2 positions LTB4. This oxidation step leads to LTB4 inactivation, which is postulated to be a crucial part of the resolution of inflammation. Mechanistically, uses molecular oxygen inserting one oxygen atom into a substrate, and reducing the second into a water molecule, with two electrons provided by NADPH via cytochrome P450 reductase (CPR; NADPH-ferrihemoprotein reductase). The sequence is that of Cytochrome P450 4F3 from Rattus norvegicus (Rat).